We begin with the raw amino-acid sequence, 101 residues long: Small ribosomal subunit protein uS14 (101 aa).

This sequence belongs to the universal ribosomal protein uS14 family. Part of the 30S ribosomal subunit. Contacts proteins S3 and S10.

Its function is as follows. Binds 16S rRNA, required for the assembly of 30S particles and may also be responsible for determining the conformation of the 16S rRNA at the A site. The chain is Small ribosomal subunit protein uS14 from Actinobacillus pleuropneumoniae serotype 3 (strain JL03).